Here is a 96-residue protein sequence, read N- to C-terminus: Co-chaperonin GroES (96 aa).

This sequence belongs to the GroES chaperonin family. In terms of assembly, heptamer of 7 subunits arranged in a ring. Interacts with the chaperonin GroEL.

It localises to the cytoplasm. In terms of biological role, together with the chaperonin GroEL, plays an essential role in assisting protein folding. The GroEL-GroES system forms a nano-cage that allows encapsulation of the non-native substrate proteins and provides a physical environment optimized to promote and accelerate protein folding. GroES binds to the apical surface of the GroEL ring, thereby capping the opening of the GroEL channel. The chain is Co-chaperonin GroES from Colwellia maris.